An 859-amino-acid polypeptide reads, in one-letter code: Auxin response factor 2 (859 aa).

Residues M1–A48 are disordered. The span at G14 to S23 shows a compositional bias: low complexity. A DNA-binding region (TF-B3) is located at residues F164–M266. Over residues L396 to P407 the composition is skewed to pro residues. 3 disordered regions span residues L396–S442, I687–T736, and R829–S859. 2 stretches are compositionally biased toward polar residues: residues I416–L426 and L695–S704. The PB1 domain occupies R733–E817. Positions S847–S859 are enriched in polar residues.

Belongs to the ARF family. As to quaternary structure, homodimers and heterodimers. Interacts with ARF1. Expressed in the whole plant.

The protein localises to the nucleus. Functionally, auxin response factors (ARFs) are transcriptional factors that bind specifically to the DNA sequence 5'-TGTCTC-3' found in the auxin-responsive promoter elements (AuxREs). Could act as transcriptional activator or repressor. Formation of heterodimers with Aux/IAA proteins may alter their ability to modulate early auxin response genes expression. Promotes flowering, stamen development, floral organ abscission and fruit dehiscence. Functions independently of ethylene and cytokinin response pathways. May act as a repressor of cell division and organ growth. This Arabidopsis thaliana (Mouse-ear cress) protein is Auxin response factor 2 (ARF2).